Reading from the N-terminus, the 134-residue chain is Large ribosomal subunit protein uL18 (134 aa).

Residues Met-1 to Arg-25 are disordered. The span at Asn-7 to Thr-19 shows a compositional bias: basic and acidic residues.

The protein belongs to the universal ribosomal protein uL18 family. Part of the 50S ribosomal subunit; part of the 5S rRNA/L5/L18/L25 subcomplex. Contacts the 5S and 23S rRNAs.

Its function is as follows. This is one of the proteins that bind and probably mediate the attachment of the 5S RNA into the large ribosomal subunit, where it forms part of the central protuberance. The sequence is that of Large ribosomal subunit protein uL18 from Corynebacterium jeikeium (strain K411).